We begin with the raw amino-acid sequence, 389 residues long: Mitochondrial tRNA-specific 2-thiouridylase 1 (389 aa).

Residues 8 to 15 (GVSGGVDS) and M34 each bind ATP. Residues 94-96 (NPD) are interaction with target base in tRNA. C99 serves as the catalytic Nucleophile. A disulfide bridge links C99 with C205. G124 is an ATP binding site. Positions 154 to 156 (KDQ) are interaction with tRNA. C205 functions as the Cysteine persulfide intermediate in the catalytic mechanism. Residues 317–318 (QH) form an interaction with tRNA region.

The protein belongs to the MnmA/TRMU family.

The protein localises to the mitochondrion. It carries out the reaction 5-taurinomethyluridine(34) in tRNA + S-sulfanyl-L-cysteinyl-[protein] + AH2 + ATP = 5-taurinomethyl-2-thiouridine(34) in tRNA + L-cysteinyl-[protein] + A + AMP + diphosphate + H(+). Its function is as follows. Catalyzes the 2-thiolation of uridine at the wobble position (U34) of mitochondrial tRNA(Lys), tRNA(Glu) and tRNA(Gln). Required for the formation of 5-taurinomethyl-2-thiouridine (tm5s2U) of mitochondrial tRNA(Lys), tRNA(Glu), and tRNA(Gln) at the wobble position. ATP is required to activate the C2 atom of the wobble base. The polypeptide is Mitochondrial tRNA-specific 2-thiouridylase 1 (Drosophila melanogaster (Fruit fly)).